The chain runs to 455 residues: MIQLDPTLLLSWRAGQHPDAPMHNDQRYMTGFGNEFASEAVADTLPVGQNSPQRVAHGLYAEQLSGTAFTAPRGENRRSWLYRMRPAAVHGTFSLIEQSQFHNDFGHGPVPPDQLRWSPLPLPQTPTDFIDGLYTMAGNGSPEAMNGVAVHLYAANASMQDRFFYNADGELLLVPQLGRLRVHTELGMLELEPQQIGVIPRGVRFRVELRDGTARGYVCENFGGLLHLPDLGPIGSNGLANPRDFETPCAAFEQREGRFELVAKFQGHLWRADIGHSPLDVVAWHGNYAPYRYDLRRFNTIGSISFDHPDPSIFTVLTSPSDTHGTANMDFAIFPPRWLVAQHTFRPPWFHRNVASEFMGLVHGVYDAKADGFAPGGASLHNCMSGHGPDAATFDKASQADLSRPDVITETMAFMFETRAVLRPTAQALHAPHRQGDYQQCWAGLRKAFQAPPAS.

The Proton acceptor role is filled by His-308. Residues His-351 and Glu-357 each contribute to the Fe cation site. Positions 366 and 387 each coordinate homogentisate. Fe cation is bound at residue His-387.

It belongs to the homogentisate dioxygenase family. In terms of assembly, hexamer; dimer of trimers. Fe cation is required as a cofactor.

It carries out the reaction homogentisate + O2 = 4-maleylacetoacetate + H(+). Its pathway is amino-acid degradation; L-phenylalanine degradation; acetoacetate and fumarate from L-phenylalanine: step 4/6. Functionally, involved in the catabolism of homogentisate (2,5-dihydroxyphenylacetate or 2,5-OH-PhAc), a central intermediate in the degradation of phenylalanine and tyrosine. Catalyzes the oxidative ring cleavage of the aromatic ring of homogentisate to yield maleylacetoacetate. The sequence is that of Homogentisate 1,2-dioxygenase from Xanthomonas campestris pv. campestris (strain 8004).